The chain runs to 376 residues: MYKLLKKSGKARRGEFTTPHGVIQTPVFMNVGTLAAIKGAVSSMDLKEIGCQVELSNTYHLHLRPGDEVVKKMGGLHKFMNWDRPILTDSGGFQVFSLSKIRKIQEEGVYFNSHIDGRKIFMGPEESMRIQSNLASTIAMAFDECVENPAPREYVEKSVERTTRWLHRCKDEMNRLNSLPDTINNKQMLFGINQGGTYEDIRIEHAKTIAKMDLDGYAIGGLAVGESHEDMYRIIDAVVPHLPEDKPIYLMGVGIPSNILEAVDRGVDFFDCVLPARNGRHAHVFTKEGKINLLNAKFELDDKPIDEGCQCPACKHYTRSYIRHLFKAKEMLAMRLCVLHNLYFYNNLMEEIRDAIDGDYFKEYKERKLKEWGGRA.

Aspartate 89 (proton acceptor) is an active-site residue. Substrate contacts are provided by residues 89 to 93, aspartate 143, glutamine 194, and glycine 221; that span reads DSGGF. The segment at 252-258 is RNA binding; that stretch reads GVGIPSN. The active-site Nucleophile is the aspartate 271. The tract at residues 276-280 is RNA binding; important for wobble base 34 recognition; it reads ARNGR. Zn(2+) contacts are provided by cysteine 309, cysteine 311, cysteine 314, and histidine 340.

The protein belongs to the queuine tRNA-ribosyltransferase family. As to quaternary structure, homodimer. Within each dimer, one monomer is responsible for RNA recognition and catalysis, while the other monomer binds to the replacement base PreQ1. It depends on Zn(2+) as a cofactor.

The catalysed reaction is 7-aminomethyl-7-carbaguanine + guanosine(34) in tRNA = 7-aminomethyl-7-carbaguanosine(34) in tRNA + guanine. The protein operates within tRNA modification; tRNA-queuosine biosynthesis. Functionally, catalyzes the base-exchange of a guanine (G) residue with the queuine precursor 7-aminomethyl-7-deazaguanine (PreQ1) at position 34 (anticodon wobble position) in tRNAs with GU(N) anticodons (tRNA-Asp, -Asn, -His and -Tyr). Catalysis occurs through a double-displacement mechanism. The nucleophile active site attacks the C1' of nucleotide 34 to detach the guanine base from the RNA, forming a covalent enzyme-RNA intermediate. The proton acceptor active site deprotonates the incoming PreQ1, allowing a nucleophilic attack on the C1' of the ribose to form the product. After dissociation, two additional enzymatic reactions on the tRNA convert PreQ1 to queuine (Q), resulting in the hypermodified nucleoside queuosine (7-(((4,5-cis-dihydroxy-2-cyclopenten-1-yl)amino)methyl)-7-deazaguanosine). This Clostridium botulinum (strain Okra / Type B1) protein is Queuine tRNA-ribosyltransferase.